Consider the following 230-residue polypeptide: Ribosomal RNA large subunit methyltransferase E (230 aa).

The span at 1-13 shows a compositional bias: gly residues; it reads MSGSGGKGGGRGG. Residues 1–22 are disordered; it reads MSGSGGKGGGRGGLHVRVKTAK. Residues G81, W83, D100, D116, and D140 each coordinate S-adenosyl-L-methionine. The Proton acceptor role is filled by K180.

This sequence belongs to the class I-like SAM-binding methyltransferase superfamily. RNA methyltransferase RlmE family.

The protein localises to the cytoplasm. It catalyses the reaction uridine(2552) in 23S rRNA + S-adenosyl-L-methionine = 2'-O-methyluridine(2552) in 23S rRNA + S-adenosyl-L-homocysteine + H(+). Its function is as follows. Specifically methylates the uridine in position 2552 of 23S rRNA at the 2'-O position of the ribose in the fully assembled 50S ribosomal subunit. This Sphingopyxis alaskensis (strain DSM 13593 / LMG 18877 / RB2256) (Sphingomonas alaskensis) protein is Ribosomal RNA large subunit methyltransferase E.